We begin with the raw amino-acid sequence, 343 residues long: GDSL esterase/lipase EXL6 (343 aa).

An N-terminal signal peptide occupies residues 1–21 (MFRGKIFVLSLFSIYVLSSAA). An N-linked (GlcNAc...) asparagine glycan is attached at asparagine 24. The Nucleophile role is filled by serine 36. Catalysis depends on residues aspartate 318 and histidine 321.

It belongs to the 'GDSL' lipolytic enzyme family. In terms of tissue distribution, flower buds and pollen.

It localises to the secreted. The protein resides in the extracellular space. The protein localises to the extracellular matrix. It is found in the pollen coat. In terms of biological role, required for the formation of pollen coats and male fertility. The polypeptide is GDSL esterase/lipase EXL6 (EXL6) (Arabidopsis thaliana (Mouse-ear cress)).